A 149-amino-acid polypeptide reads, in one-letter code: Arginine repressor (149 aa).

Belongs to the ArgR family.

Its subcellular location is the cytoplasm. Its pathway is amino-acid biosynthesis; L-arginine biosynthesis [regulation]. Functionally, regulates arginine biosynthesis genes. In Exiguobacterium sibiricum (strain DSM 17290 / CCUG 55495 / CIP 109462 / JCM 13490 / 255-15), this protein is Arginine repressor.